Here is a 181-residue protein sequence, read N- to C-terminus: Crustacyanin-A1 subunit (181 aa).

Disulfide bonds link Cys12–Cys121, Cys51–Cys173, and Cys117–Cys150.

The protein belongs to the calycin superfamily. Lipocalin family. As to quaternary structure, oligomer; Can form dimers (beta-crustacyanin); or complexes of 16 subunits (alpha-crustacyanin). There are five types of subunits: A1, A2, A3, C1 and C2. Found in the carapace.

It localises to the secreted. The protein localises to the extracellular space. Binds the carotenoid astaxanthin (AXT) which provides the blue coloration to the carapace of the lobster. The polypeptide is Crustacyanin-A1 subunit (Homarus gammarus (European lobster)).